A 229-amino-acid chain; its full sequence is Orotidine 5'-phosphate decarboxylase (229 aa).

Residues D11, K33, 61–70, T116, R179, Q188, G208, and R209 contribute to the substrate site; that span reads DMKLFDISAT. K63 (proton donor) is an active-site residue.

The protein belongs to the OMP decarboxylase family. Type 1 subfamily. As to quaternary structure, homodimer.

The catalysed reaction is orotidine 5'-phosphate + H(+) = UMP + CO2. It participates in pyrimidine metabolism; UMP biosynthesis via de novo pathway; UMP from orotate: step 2/2. In terms of biological role, catalyzes the decarboxylation of orotidine 5'-monophosphate (OMP) to uridine 5'-monophosphate (UMP). This Jannaschia sp. (strain CCS1) protein is Orotidine 5'-phosphate decarboxylase.